Reading from the N-terminus, the 396-residue chain is Tryptophan synthase beta chain (396 aa).

Residue lysine 88 is modified to N6-(pyridoxal phosphate)lysine.

This sequence belongs to the TrpB family. In terms of assembly, tetramer of two alpha and two beta chains. It depends on pyridoxal 5'-phosphate as a cofactor.

The catalysed reaction is (1S,2R)-1-C-(indol-3-yl)glycerol 3-phosphate + L-serine = D-glyceraldehyde 3-phosphate + L-tryptophan + H2O. It functions in the pathway amino-acid biosynthesis; L-tryptophan biosynthesis; L-tryptophan from chorismate: step 5/5. Functionally, the beta subunit is responsible for the synthesis of L-tryptophan from indole and L-serine. In Shewanella oneidensis (strain ATCC 700550 / JCM 31522 / CIP 106686 / LMG 19005 / NCIMB 14063 / MR-1), this protein is Tryptophan synthase beta chain.